The following is a 397-amino-acid chain: E3 ubiquitin-protein ligase RNF149 (397 aa).

Residues 1-20 (MLRWLCLYSALCALTHGSSA) form the signal peptide. Polar residues predominate over residues 39–49 (TNSSVTGSTES). Positions 39 to 60 (TNSSVTGSTESGRYGDSSPKES) are disordered. N-linked (GlcNAc...) asparagine glycans are attached at residues Asn40 and Asn140. A PA domain is found at 83–170 (YIVPGTSAAA…PKGMEIMEPL (88 aa)). Residues 196 to 216 (VVFVAIAFITMMIISLAWLIF) traverse the membrane as a helical segment. The N-linked (GlcNAc...) asparagine glycan is linked to Asn231. An RING-type; atypical zinc finger spans residues 264-305 (CAVCIENYKTKDLVRILPCKHIFHRLCIDPWLIEHRTCPMCK). The segment at 341–397 (SITQEESRSEGNNLPSSSTGSSLQQSNSVKDDAGETTALLDDPGNDNAAATHTQDSH) is disordered. Residues 351–368 (GNNLPSSSTGSSLQQSNS) are compositionally biased toward low complexity. The span at 388-397 (AAATHTQDSH) shows a compositional bias: polar residues.

The protein resides in the membrane. The catalysed reaction is S-ubiquitinyl-[E2 ubiquitin-conjugating enzyme]-L-cysteine + [acceptor protein]-L-lysine = [E2 ubiquitin-conjugating enzyme]-L-cysteine + N(6)-ubiquitinyl-[acceptor protein]-L-lysine.. It participates in protein modification; protein ubiquitination. In terms of biological role, E3 ubiquitin-protein ligase. Ubiquitinates BRAF, inducing its proteasomal degradation. The sequence is that of E3 ubiquitin-protein ligase RNF149 (rnf149) from Xenopus laevis (African clawed frog).